A 147-amino-acid chain; its full sequence is Cyanate hydratase (147 aa).

Catalysis depends on residues R88, E91, and S114.

It belongs to the cyanase family.

The catalysed reaction is cyanate + hydrogencarbonate + 3 H(+) = NH4(+) + 2 CO2. Its function is as follows. Catalyzes the reaction of cyanate with bicarbonate to produce ammonia and carbon dioxide. In Albidiferax ferrireducens (strain ATCC BAA-621 / DSM 15236 / T118) (Rhodoferax ferrireducens), this protein is Cyanate hydratase.